Here is a 1044-residue protein sequence, read N- to C-terminus: Unconventional myosin-Ic (1044 aa).

The region spanning 28-712 (GVQDFVLLEN…TLFATEDSLE (685 aa)) is the Myosin motor domain. ATP contacts are provided by residues Asn-69, Tyr-77, 120–129 (SGESGAGKTE), and 173–177 (NDNSS). Position 364 is an N6-methyllysine (Lys-364). Ser-389 is subject to Phosphoserine. An N6-acetyllysine modification is found at Lys-467. Ser-517 is modified (phosphoserine). The interval 589-611 (LLQLVEILRSKEPAYIRCIKPND) is actin-binding. IQ domains lie at 715-744 (RQSL…SAIC) and 738-767 (VKRS…AAQT). A phosphoserine mark is found at Ser-845 and Ser-1022. Residues 866–1040 (KDNYPQSVPR…NGHLAVVAPR (175 aa)) enclose the TH1 domain.

This sequence belongs to the TRAFAC class myosin-kinesin ATPase superfamily. Myosin family. In terms of assembly, interacts (via its IQ motifs) with CABP1 and CIB1; the interaction with CABP1 and CIB1 is calcium-dependent. Interacts (via tail domain) with PLEKHB1 (via PH domain); the interaction is not affected by the presence or absence of calcium and CALM. Interacts with POLR1A. Interacts with POLR2A. Component of the B-WICH complex, at least composed of SMARCA5/SNF2H, BAZ1B/WSTF, SF3B1, DEK, MYO1C, ERCC6, MYBBP1A and DDX21. Interacts (via its IQ motifs) with CALM; this precludes interaction with YWHAB. Interacts with YWHAB; this precludes interaction with CALM. Interacts with RPS6. Interacts with actin. Interacts with LLPH. Interacts with GLUT4. Interacts (via its IQ motifs) with SH3BGRL3; the interaction is dependent on calcium and takes place at membrane ruffles.

The protein localises to the cytoplasm. It is found in the nucleus. It localises to the cell cortex. The protein resides in the cell projection. Its subcellular location is the stereocilium membrane. The protein localises to the cytoplasmic vesicle. It is found in the ruffle membrane. Functionally, myosins are actin-based motor molecules with ATPase activity. Unconventional myosins serve in intracellular movements. Their highly divergent tails are presumed to bind to membranous compartments, which would be moved relative to actin filaments. Involved in glucose transporter recycling in response to insulin by regulating movement of intracellular GLUT4-containing vesicles to the plasma membrane. Component of the hair cell's (the sensory cells of the inner ear) adaptation-motor complex. Acts as a mediator of adaptation of mechanoelectrical transduction in stereocilia of vestibular hair cells. Binds phosphoinositides and links the actin cytoskeleton to cellular membranes. This chain is Unconventional myosin-Ic (Myo1c), found in Rattus norvegicus (Rat).